A 79-amino-acid polypeptide reads, in one-letter code: UPF0154 protein lwe1321 (79 aa).

Residues 2-22 (WIYILVGIICLLAGLAGGFFI) form a helical membrane-spanning segment. The span at 57 to 66 (KINQMMSAMN) shows a compositional bias: polar residues. Residues 57–79 (KINQMMSAMNKQQEKEKPKKAKK) form a disordered region.

It belongs to the UPF0154 family.

It is found in the cell membrane. The sequence is that of UPF0154 protein lwe1321 from Listeria welshimeri serovar 6b (strain ATCC 35897 / DSM 20650 / CCUG 15529 / CIP 8149 / NCTC 11857 / SLCC 5334 / V8).